The chain runs to 340 residues: 4-hydroxythreonine-4-phosphate dehydrogenase (340 aa).

Residues His141 and Thr142 each coordinate substrate. Residues His171, His216, and His271 each contribute to the a divalent metal cation site. 3 residues coordinate substrate: Lys279, Asn288, and Arg297.

Belongs to the PdxA family. Homodimer. Zn(2+) is required as a cofactor. The cofactor is Mg(2+). Requires Co(2+) as cofactor.

It localises to the cytoplasm. It carries out the reaction 4-(phosphooxy)-L-threonine + NAD(+) = 3-amino-2-oxopropyl phosphate + CO2 + NADH. Its pathway is cofactor biosynthesis; pyridoxine 5'-phosphate biosynthesis; pyridoxine 5'-phosphate from D-erythrose 4-phosphate: step 4/5. Catalyzes the NAD(P)-dependent oxidation of 4-(phosphooxy)-L-threonine (HTP) into 2-amino-3-oxo-4-(phosphooxy)butyric acid which spontaneously decarboxylates to form 3-amino-2-oxopropyl phosphate (AHAP). This Desulforapulum autotrophicum (strain ATCC 43914 / DSM 3382 / VKM B-1955 / HRM2) (Desulfobacterium autotrophicum) protein is 4-hydroxythreonine-4-phosphate dehydrogenase.